The sequence spans 156 residues: uncharacterized protein (156 aa).

The N-acetyltransferase domain maps to 10–156 (VAARTFPLAC…NDYVMVRELV (147 aa)).

The protein belongs to the acetyltransferase family.

This is an uncharacterized protein from Mycobacterium bovis (strain ATCC BAA-935 / AF2122/97).